Consider the following 303-residue polypeptide: Recombination-associated protein RdgC (303 aa).

It belongs to the RdgC family.

It localises to the cytoplasm. The protein resides in the nucleoid. Its function is as follows. May be involved in recombination. The chain is Recombination-associated protein RdgC from Salmonella newport (strain SL254).